The chain runs to 235 residues: Large ribosomal subunit protein uL1 (235 aa).

Belongs to the universal ribosomal protein uL1 family. In terms of assembly, part of the 50S ribosomal subunit.

Functionally, binds directly to 23S rRNA. The L1 stalk is quite mobile in the ribosome, and is involved in E site tRNA release. Protein L1 is also a translational repressor protein, it controls the translation of the L11 operon by binding to its mRNA. This Mycobacterium tuberculosis (strain ATCC 25177 / H37Ra) protein is Large ribosomal subunit protein uL1.